We begin with the raw amino-acid sequence, 425 residues long: Threonine synthase (425 aa).

Lys-105 bears the N6-(pyridoxal phosphate)lysine mark.

The protein belongs to the threonine synthase family. It depends on pyridoxal 5'-phosphate as a cofactor.

The catalysed reaction is O-phospho-L-homoserine + H2O = L-threonine + phosphate. The protein operates within amino-acid biosynthesis; L-threonine biosynthesis; L-threonine from L-aspartate: step 5/5. Catalyzes the gamma-elimination of phosphate from L-phosphohomoserine and the beta-addition of water to produce L-threonine. The protein is Threonine synthase (thrC) of Haemophilus influenzae (strain ATCC 51907 / DSM 11121 / KW20 / Rd).